Reading from the N-terminus, the 1354-residue chain is Tensin homolog (1354 aa).

In terms of domain architecture, Phosphatase tensin-type spans 38-207 (MKDRKEGVQV…GYFSSLLSGR (170 aa)). Cys144 serves as the catalytic Phosphocysteine intermediate. The 126-residue stretch at 212–337 (SDPLYLHNII…VTVELVVSHT (126 aa)) folds into the C2 tensin-type domain. Disordered stretches follow at residues 380-442 (EYSE…DVVP), 597-616 (STLQ…RTLN), 638-660 (SNTA…SVQL), 692-720 (DVRG…NNTP), 734-754 (SVTT…EADA), 794-879 (AANN…DRQR), and 1015-1035 (NGER…HNGY). The segment covering 391 to 401 (SSKSANPINNN) has biased composition (polar residues). Residues 408–417 (VGPPVPPKPS) show a composition bias toward pro residues. 3 stretches are compositionally biased toward polar residues: residues 704-720 (HNAS…NNTP), 734-747 (SVTT…STPS), and 794-804 (AANNDENQHNL). A compositionally biased stretch (basic and acidic residues) spans 821 to 843 (AEFRREEERLRNTRSPYGEERWR). Gly residues predominate over residues 1017–1033 (ERGGSGHAAGGGGGGHN). Residues 1083 to 1187 (WYKPTISREQ…ALPTKLVLPD (105 aa)) enclose the SH2 domain. The 145-residue stretch at 1209–1353 (ACNVVYVGSV…NKVMLAQKNR (145 aa)) folds into the PTB domain.

This sequence belongs to the PTEN phosphatase protein family. In terms of assembly, may interact (via SH2 domain) with receptor svh-2 (when tyrosine-phosphorylated). May interact (via C-terminus) with integrin pat-3. In terms of tissue distribution, expressed in ventral motor neurons, including ventral and dorsal D-type neurons, and in a subset of cells in the head.

It localises to the cell projection. Its subcellular location is the axon. The enzyme catalyses O-phospho-L-tyrosyl-[protein] + H2O = L-tyrosyl-[protein] + phosphate. Probable phosphatase which regulates axon regeneration after injury by linking the svh-2 and integrin signaling pathways. In terms of biological role, not involved in axon regeneration after injury. This chain is Tensin homolog, found in Caenorhabditis elegans.